An 846-amino-acid polypeptide reads, in one-letter code: uncharacterized protein (846 aa).

6 WD repeats span residues 88 to 129 (TKHI…LLYD), 132 to 172 (EHSR…STIT), 175 to 215 (GNSE…LPFL), 219 to 258 (AHNGVVLCVNYSPNGVFLASCGRDKTIRIWDSTSNKKKSL), 262 to 309 (NNVS…IPYR), and 313 to 348 (CHDSIVSTMHWASTELLWSCSKDGIFSQTRVENAFN). The interval 541-560 (PREASTPSESSNSSIESEDN) is disordered. Low complexity predominate over residues 544-555 (ASTPSESSNSSI). One copy of the WD 7 repeat lies at 624 to 663 (FHRSSVTSASIKSREAVLSAGNSSRRASIFLDQLSLHGDT).

This is an uncharacterized protein from Schizosaccharomyces pombe (strain 972 / ATCC 24843) (Fission yeast).